The sequence spans 306 residues: UDP-3-O-acyl-N-acetylglucosamine deacetylase (306 aa).

Zn(2+) is bound by residues His-79, His-238, and Asp-242. The Proton donor role is filled by His-265.

This sequence belongs to the LpxC family. It depends on Zn(2+) as a cofactor.

The catalysed reaction is a UDP-3-O-[(3R)-3-hydroxyacyl]-N-acetyl-alpha-D-glucosamine + H2O = a UDP-3-O-[(3R)-3-hydroxyacyl]-alpha-D-glucosamine + acetate. The protein operates within glycolipid biosynthesis; lipid IV(A) biosynthesis; lipid IV(A) from (3R)-3-hydroxytetradecanoyl-[acyl-carrier-protein] and UDP-N-acetyl-alpha-D-glucosamine: step 2/6. Its function is as follows. Catalyzes the hydrolysis of UDP-3-O-myristoyl-N-acetylglucosamine to form UDP-3-O-myristoylglucosamine and acetate, the committed step in lipid A biosynthesis. The sequence is that of UDP-3-O-acyl-N-acetylglucosamine deacetylase from Yersinia pseudotuberculosis serotype O:1b (strain IP 31758).